The primary structure comprises 703 residues: ABC transporter G family member 11 (703 aa).

One can recognise an ABC transporter domain in the interval 50–293; it reads LTWQDLTVMV…FAQAGFPCPA (244 aa). 87–94 provides a ligand contact to ATP; the sequence is GPSGSGKS. The ABC transmembrane type-2 domain maps to 382–594; sequence LQTYTLTKRS…ALQGQYQNDL (213 aa). N394 carries N-linked (GlcNAc...) asparagine glycosylation. The next 6 helical transmembrane spans lie at 406–426, 436–456, 485–505, 513–533, 540–560, and 628–648; these read LLIY…VGTS, CASF…PSFV, TPFL…MVGL, LFFV…MMAI, FLMG…VSGF, and INLS…FIMI. N-linked (GlcNAc...) asparagine glycans are attached at residues N671 and N675. S688 carries the phosphoserine modification.

The protein belongs to the ABC transporter superfamily. ABCG family. Eye pigment precursor importer (TC 3.A.1.204) subfamily. Homodimer. Forms heterodimers with ABCG9, ABCG12 and ABCG14 in epidermal cells. Expressed in seedlings, roots, stems, leaves, flowers, and siliques, mostly in epidermis, trichomes, vasculatures and developing tissues. Follows an uniparental maternal expression in the seed, thus being the product of a maternally expressed imprinted gene. Accumulates in the phloem. Transcripts seem to be transported from shoots to roots.

Its subcellular location is the cell membrane. Functionally, required for the cuticle, root suberin and pollen coat development by controlling cutin and maybe wax transport to the extracellular matrix. Involved in developmental plasticity and stress responses. Together with ABCG9 and ABCG14, required for vascular development by regulating lipid/sterol homeostasis. May be a transporter of lignin precursors during tracheary element differentiation. The protein is ABC transporter G family member 11 of Arabidopsis thaliana (Mouse-ear cress).